Here is a 319-residue protein sequence, read N- to C-terminus: Acetyl-coenzyme A carboxylase carboxyl transferase subunit alpha (319 aa).

The CoA carboxyltransferase C-terminal domain maps to 35-296 (NIDEEVHRLR…KAQLLADLAD (262 aa)).

This sequence belongs to the AccA family. As to quaternary structure, acetyl-CoA carboxylase is a heterohexamer composed of biotin carboxyl carrier protein (AccB), biotin carboxylase (AccC) and two subunits each of ACCase subunit alpha (AccA) and ACCase subunit beta (AccD).

The protein localises to the cytoplasm. The catalysed reaction is N(6)-carboxybiotinyl-L-lysyl-[protein] + acetyl-CoA = N(6)-biotinyl-L-lysyl-[protein] + malonyl-CoA. Its pathway is lipid metabolism; malonyl-CoA biosynthesis; malonyl-CoA from acetyl-CoA: step 1/1. Functionally, component of the acetyl coenzyme A carboxylase (ACC) complex. First, biotin carboxylase catalyzes the carboxylation of biotin on its carrier protein (BCCP) and then the CO(2) group is transferred by the carboxyltransferase to acetyl-CoA to form malonyl-CoA. The chain is Acetyl-coenzyme A carboxylase carboxyl transferase subunit alpha from Escherichia coli O139:H28 (strain E24377A / ETEC).